Consider the following 127-residue polypeptide: Modulator protein MzrA (127 aa).

The Cytoplasmic segment spans residues 1 to 10 (MGLQNMTLRR). A helical membrane pass occupies residues 11–31 (FTLSMSALLLLCALLWLWAAL). Topologically, residues 32-127 (EQQESSLAIR…RLRDAPHRLG (96 aa)) are periplasmic.

The protein belongs to the MzrA family. In terms of assembly, interacts with EnvZ.

It is found in the cell inner membrane. In terms of biological role, modulates the activity of the EnvZ/OmpR two-component regulatory system, probably by directly modulating EnvZ enzymatic activity and increasing stability of phosphorylated OmpR. The protein is Modulator protein MzrA of Enterobacter lignolyticus (strain SCF1).